The sequence spans 368 residues: Nicotinamide/nicotinic acid mononucleotide adenylyltransferase (368 aa).

The segment covering 1 to 14 has biased composition (polar residues); it reads MHTMNGDNFANSFP. The interval 1 to 25 is disordered; that stretch reads MHTMNGDNFANSFPKNPLLSRNSSS. At Ser-36 the chain carries Phosphoserine. Positions 47 to 78 are disordered; the sequence is AKEHEERIRRPSVNRAWQKNSTSGGPSVSLEK. The segment covering 61-72 has biased composition (polar residues); it reads RAWQKNSTSGGP. Phosphoserine is present on residues Ser-75 and Ser-85. 2 residues coordinate NAD(+): Ser-135 and Phe-136. An ATP-binding site is contributed by His-143. Residues Thr-215, Gly-250, Asp-252, Trp-263, Arg-282, and Asn-313 each coordinate NAD(+). 318-321 serves as a coordination point for ATP; it reads TKVR.

This sequence belongs to the eukaryotic NMN adenylyltransferase family. A divalent metal cation serves as cofactor.

It is found in the cytoplasm. The protein resides in the nucleus. It catalyses the reaction beta-nicotinamide D-ribonucleotide + ATP + H(+) = diphosphate + NAD(+). It carries out the reaction nicotinate beta-D-ribonucleotide + ATP + H(+) = deamido-NAD(+) + diphosphate. It participates in cofactor biosynthesis; NAD(+) biosynthesis; deamido-NAD(+) from nicotinate D-ribonucleotide: step 1/1. The protein operates within cofactor biosynthesis; NAD(+) biosynthesis; NAD(+) from nicotinamide D-ribonucleotide: step 1/1. Catalyzes the formation of NAD(+) from nicotinamide mononucleotide (NMN) and ATP. Can also use the deamidated form; nicotinic acid mononucleotide (NaMN) as substrate to form deamido-NAD(+) (NaAD). Key enzyme in both de novo and salvage pathways for NAD(+) biosynthesis. In Schizosaccharomyces pombe (strain 972 / ATCC 24843) (Fission yeast), this protein is Nicotinamide/nicotinic acid mononucleotide adenylyltransferase.